The following is a 117-amino-acid chain: Putative membrane protein insertion efficiency factor (117 aa).

Belongs to the UPF0161 family.

It is found in the cell inner membrane. Its function is as follows. Could be involved in insertion of integral membrane proteins into the membrane. This Bartonella quintana (strain Toulouse) (Rochalimaea quintana) protein is Putative membrane protein insertion efficiency factor.